Consider the following 367-residue polypeptide: Glutamate 5-kinase (367 aa).

K9 is a binding site for ATP. S49, D136, and N148 together coordinate substrate. ATP is bound by residues T168–D169 and T210–K216. Residues S276–R350 enclose the PUA domain.

The protein belongs to the glutamate 5-kinase family.

It localises to the cytoplasm. The enzyme catalyses L-glutamate + ATP = L-glutamyl 5-phosphate + ADP. The protein operates within amino-acid biosynthesis; L-proline biosynthesis; L-glutamate 5-semialdehyde from L-glutamate: step 1/2. Catalyzes the transfer of a phosphate group to glutamate to form L-glutamate 5-phosphate. The sequence is that of Glutamate 5-kinase from Bacillus anthracis.